A 514-amino-acid polypeptide reads, in one-letter code: Probable cysteine protease ATG4 (514 aa).

Residues 1 to 15 (MAREDASVPRSHDSA) show a composition bias toward basic and acidic residues. 2 disordered regions span residues 1–28 (MAREDASVPRSHDSADASPNSTAKEIPV) and 61–84 (DSSDDRNNNNSNNGINAAESDSAQ). The active-site Nucleophile is the cysteine 166. Catalysis depends on residues aspartate 336 and histidine 338. Residues 461 to 514 (ATPSAEDTVPVSTLSASESEITTSSYETPTSKDDNSSRASLDVVVLDTTGEQQE) are disordered. A compositionally biased stretch (low complexity) spans 472 to 489 (STLSASESEITTSSYETP).

Belongs to the peptidase C54 family.

It is found in the cytoplasm. The protein localises to the nucleus. It localises to the preautophagosomal structure. It catalyses the reaction [protein]-C-terminal L-amino acid-glycyl-phosphatidylethanolamide + H2O = [protein]-C-terminal L-amino acid-glycine + a 1,2-diacyl-sn-glycero-3-phosphoethanolamine. Functionally, cysteine protease that plays a key role in cytoplasm to vacuole transport (Cvt) and autophagy by mediating both proteolytic activation and delipidation of ATG8. Required for selective autophagic degradation of the nucleus (nucleophagy) as well as for mitophagy which contributes to regulate mitochondrial quantity and quality by eliminating the mitochondria to a basal level to fulfill cellular energy requirements and preventing excess ROS production. The protease activity is required for proteolytic activation of ATG8: cleaves the C-terminal amino acid of ATG8 to reveal a C-terminal glycine. ATG8 ubiquitin-like activity requires the exposure of the glycine at the C-terminus for its conjugation to phosphatidylethanolamine (PE) and its insertion to membranes, which is necessary for autophagy. The ATG8-PE conjugate mediates tethering between adjacent membranes and stimulates membrane hemifusion, leading to expansion of the autophagosomal membrane during autophagy. In addition to the protease activity, also catalyzes deconjugation of PE-conjugated forms of ATG8 during macroautophagy: ATG8 delipidation is required to release the protein from membranes, which facilitates multiple events during macroautophagy, and especially for efficient autophagosome biogenesis, the assembly of ATG9-containing tubulovesicular clusters into phagophores/autophagosomes, and for the disassembly of PAS-associated ATG components. ATG8 delipidation by ATG4 also recycles ATG8-PE generated on inappropriate membranes to maintain a reservoir of unlipidated ATG8 that is required for autophagosome formation at the PAS. In Scheffersomyces stipitis (strain ATCC 58785 / CBS 6054 / NBRC 10063 / NRRL Y-11545) (Yeast), this protein is Probable cysteine protease ATG4 (ATG4).